Consider the following 357-residue polypeptide: Fructose-bisphosphate aldolase, cytoplasmic isozyme 1 (357 aa).

Substrate-binding residues include arginine 52 and lysine 142. Glutamate 183 acts as the Proton acceptor in catalysis. The Schiff-base intermediate with dihydroxyacetone-P role is filled by lysine 225.

The protein belongs to the class I fructose-bisphosphate aldolase family.

The protein localises to the cytoplasm. The catalysed reaction is beta-D-fructose 1,6-bisphosphate = D-glyceraldehyde 3-phosphate + dihydroxyacetone phosphate. The protein operates within carbohydrate degradation; glycolysis; D-glyceraldehyde 3-phosphate and glycerone phosphate from D-glucose: step 4/4. This chain is Fructose-bisphosphate aldolase, cytoplasmic isozyme 1, found in Pisum sativum (Garden pea).